We begin with the raw amino-acid sequence, 671 residues long: UvrABC system protein B (671 aa).

In terms of domain architecture, Helicase ATP-binding spans 35-423 (KAIIENKKHQ…NHQVVQQIIR (389 aa)). 48–55 (GATGTGKT) provides a ligand contact to ATP. The Beta-hairpin motif lies at 101–124 (NFDFFQPEAYIPSKDLYIDKDSRQ). Residues 440-602 (QIDDIINEIH…IVPKTISKAI (163 aa)) enclose the Helicase C-terminal domain. The UVR domain occupies 632–667 (QQTIDNLRQEMLQAAKELDFERAAILRDTIIELENE).

It belongs to the UvrB family. As to quaternary structure, forms a heterotetramer with UvrA during the search for lesions. Interacts with UvrC in an incision complex.

The protein localises to the cytoplasm. In terms of biological role, the UvrABC repair system catalyzes the recognition and processing of DNA lesions. A damage recognition complex composed of 2 UvrA and 2 UvrB subunits scans DNA for abnormalities. Upon binding of the UvrA(2)B(2) complex to a putative damaged site, the DNA wraps around one UvrB monomer. DNA wrap is dependent on ATP binding by UvrB and probably causes local melting of the DNA helix, facilitating insertion of UvrB beta-hairpin between the DNA strands. Then UvrB probes one DNA strand for the presence of a lesion. If a lesion is found the UvrA subunits dissociate and the UvrB-DNA preincision complex is formed. This complex is subsequently bound by UvrC and the second UvrB is released. If no lesion is found, the DNA wraps around the other UvrB subunit that will check the other stand for damage. The polypeptide is UvrABC system protein B (Mycoplasma mycoides subsp. mycoides SC (strain CCUG 32753 / NCTC 10114 / PG1)).